The primary structure comprises 129 residues: Putative membrane protein insertion efficiency factor (129 aa).

It belongs to the UPF0161 family.

The protein resides in the cell inner membrane. Its function is as follows. Could be involved in insertion of integral membrane proteins into the membrane. The protein is Putative membrane protein insertion efficiency factor of Rhodopseudomonas palustris (strain TIE-1).